The sequence spans 1388 residues: Kinesin-like protein KIF15 (1388 aa).

Residues 1–25 form a disordered region; it reads MAPGCKTELRSVTNGQSNQPSNEGD. A compositionally biased stretch (polar residues) spans 10–22; it reads RSVTNGQSNQPSN. Positions 26–363 constitute a Kinesin motor domain; that stretch reads AIKVFVRIRP…LNFAQRAKLI (338 aa). 109–116 lines the ATP pocket; the sequence is GQTGSGKT. Positions 368–1388 form a coiled coil; sequence VVNEDTQGNV…FLKEKKRSES (1021 aa). Thr-399 is subject to Phosphothreonine. Ser-568 is modified (phosphoserine). N6-acetyllysine is present on Lys-1009. 2 positions are modified to phosphoserine: Ser-1141 and Ser-1169. The segment at 1228–1250 is disordered; the sequence is QKENSDQNHPDNQQLKNEQEESI.

The protein belongs to the TRAFAC class myosin-kinesin ATPase superfamily. Kinesin family. KLP2 subfamily. In terms of assembly, interacts with MKI67 and TPX2. Expressed in testis, colon, thymus and in breast cancer.

It localises to the cytoplasm. Its subcellular location is the cytoskeleton. The protein localises to the spindle. Its function is as follows. Plus-end directed kinesin-like motor enzyme involved in mitotic spindle assembly. The sequence is that of Kinesin-like protein KIF15 (KIF15) from Homo sapiens (Human).